Consider the following 275-residue polypeptide: Phosphatidylglycerol--prolipoprotein diacylglyceryl transferase (275 aa).

A run of 3 helical transmembrane segments spans residues 18–38 (IEVH…YFIA), 55–75 (IIFW…VIFQ), and 89–109 (IWHG…TGVI). Arginine 137 is an a 1,2-diacyl-sn-glycero-3-phospho-(1'-sn-glycerol) binding site. 2 helical membrane-spanning segments follow: residues 203-223 (IGET…FVEG) and 235-255 (IRVA…MIIY).

The protein belongs to the Lgt family.

The protein resides in the cell membrane. The enzyme catalyses L-cysteinyl-[prolipoprotein] + a 1,2-diacyl-sn-glycero-3-phospho-(1'-sn-glycerol) = an S-1,2-diacyl-sn-glyceryl-L-cysteinyl-[prolipoprotein] + sn-glycerol 1-phosphate + H(+). The protein operates within protein modification; lipoprotein biosynthesis (diacylglyceryl transfer). In terms of biological role, catalyzes the transfer of the diacylglyceryl group from phosphatidylglycerol to the sulfhydryl group of the N-terminal cysteine of a prolipoprotein, the first step in the formation of mature lipoproteins. The sequence is that of Phosphatidylglycerol--prolipoprotein diacylglyceryl transferase from Staphylococcus carnosus (strain TM300).